The following is a 452-amino-acid chain: Probable glycine dehydrogenase (decarboxylating) subunit 1 (452 aa).

The protein belongs to the GcvP family. N-terminal subunit subfamily. The glycine cleavage system is composed of four proteins: P, T, L and H. In this organism, the P 'protein' is a heterodimer of two subunits.

It carries out the reaction N(6)-[(R)-lipoyl]-L-lysyl-[glycine-cleavage complex H protein] + glycine + H(+) = N(6)-[(R)-S(8)-aminomethyldihydrolipoyl]-L-lysyl-[glycine-cleavage complex H protein] + CO2. Its function is as follows. The glycine cleavage system catalyzes the degradation of glycine. The P protein binds the alpha-amino group of glycine through its pyridoxal phosphate cofactor; CO(2) is released and the remaining methylamine moiety is then transferred to the lipoamide cofactor of the H protein. In Novosphingobium aromaticivorans (strain ATCC 700278 / DSM 12444 / CCUG 56034 / CIP 105152 / NBRC 16084 / F199), this protein is Probable glycine dehydrogenase (decarboxylating) subunit 1.